The following is a 286-amino-acid chain: Bifunctional protein FolD (286 aa).

NADP(+)-binding positions include 163 to 165 (GMS), isoleucine 188, and isoleucine 229.

It belongs to the tetrahydrofolate dehydrogenase/cyclohydrolase family. Homodimer.

It catalyses the reaction (6R)-5,10-methylene-5,6,7,8-tetrahydrofolate + NADP(+) = (6R)-5,10-methenyltetrahydrofolate + NADPH. The catalysed reaction is (6R)-5,10-methenyltetrahydrofolate + H2O = (6R)-10-formyltetrahydrofolate + H(+). It functions in the pathway one-carbon metabolism; tetrahydrofolate interconversion. Its function is as follows. Catalyzes the oxidation of 5,10-methylenetetrahydrofolate to 5,10-methenyltetrahydrofolate and then the hydrolysis of 5,10-methenyltetrahydrofolate to 10-formyltetrahydrofolate. The chain is Bifunctional protein FolD from Helicobacter hepaticus (strain ATCC 51449 / 3B1).